A 105-amino-acid chain; its full sequence is Met repressor (105 aa).

It belongs to the MetJ family. In terms of assembly, homodimer.

Its subcellular location is the cytoplasm. Its function is as follows. This regulatory protein, when combined with SAM (S-adenosylmethionine) represses the expression of the methionine regulon and of enzymes involved in SAM synthesis. This Salmonella dublin (strain CT_02021853) protein is Met repressor.